The chain runs to 314 residues: Glycine--tRNA ligase alpha subunit (314 aa).

This sequence belongs to the class-II aminoacyl-tRNA synthetase family. As to quaternary structure, tetramer of two alpha and two beta subunits.

Its subcellular location is the cytoplasm. It carries out the reaction tRNA(Gly) + glycine + ATP = glycyl-tRNA(Gly) + AMP + diphosphate. This chain is Glycine--tRNA ligase alpha subunit, found in Leuconostoc citreum (strain KM20).